The primary structure comprises 226 residues: Thiamine-phosphate synthase (226 aa).

4-amino-2-methyl-5-(diphosphooxymethyl)pyrimidine is bound by residues 46-50 and aspartate 83; that span reads QFRDK. Aspartate 84 and aspartate 103 together coordinate Mg(2+). Residue serine 122 participates in 4-amino-2-methyl-5-(diphosphooxymethyl)pyrimidine binding. 149–151 contacts 2-[(2R,5Z)-2-carboxy-4-methylthiazol-5(2H)-ylidene]ethyl phosphate; it reads TQS. Lysine 152 is a binding site for 4-amino-2-methyl-5-(diphosphooxymethyl)pyrimidine. 2-[(2R,5Z)-2-carboxy-4-methylthiazol-5(2H)-ylidene]ethyl phosphate is bound by residues glycine 181 and 201–202; that span reads IT.

Belongs to the thiamine-phosphate synthase family. Mg(2+) serves as cofactor.

The enzyme catalyses 2-[(2R,5Z)-2-carboxy-4-methylthiazol-5(2H)-ylidene]ethyl phosphate + 4-amino-2-methyl-5-(diphosphooxymethyl)pyrimidine + 2 H(+) = thiamine phosphate + CO2 + diphosphate. It catalyses the reaction 2-(2-carboxy-4-methylthiazol-5-yl)ethyl phosphate + 4-amino-2-methyl-5-(diphosphooxymethyl)pyrimidine + 2 H(+) = thiamine phosphate + CO2 + diphosphate. It carries out the reaction 4-methyl-5-(2-phosphooxyethyl)-thiazole + 4-amino-2-methyl-5-(diphosphooxymethyl)pyrimidine + H(+) = thiamine phosphate + diphosphate. The protein operates within cofactor biosynthesis; thiamine diphosphate biosynthesis; thiamine phosphate from 4-amino-2-methyl-5-diphosphomethylpyrimidine and 4-methyl-5-(2-phosphoethyl)-thiazole: step 1/1. Functionally, condenses 4-methyl-5-(beta-hydroxyethyl)thiazole monophosphate (THZ-P) and 2-methyl-4-amino-5-hydroxymethyl pyrimidine pyrophosphate (HMP-PP) to form thiamine monophosphate (TMP). The sequence is that of Thiamine-phosphate synthase from Haemophilus influenzae (strain 86-028NP).